We begin with the raw amino-acid sequence, 55 residues long: Large ribosomal subunit protein bL33 (55 aa).

Belongs to the bacterial ribosomal protein bL33 family.

This Pseudarthrobacter chlorophenolicus (strain ATCC 700700 / DSM 12829 / CIP 107037 / JCM 12360 / KCTC 9906 / NCIMB 13794 / A6) (Arthrobacter chlorophenolicus) protein is Large ribosomal subunit protein bL33.